Here is a 1037-residue protein sequence, read N- to C-terminus: Exportin-T (1037 aa).

Belongs to the exportin family.

It is found in the nucleus. Its subcellular location is the cytoplasm. Functionally, tRNA nucleus export receptor which facilitates tRNA translocation across the nuclear pore complex. Involved in pre-tRNA splicing, probably by affecting the interaction of pre-tRNA with splicing endonuclease. This chain is Exportin-T (los1), found in Neosartorya fischeri (strain ATCC 1020 / DSM 3700 / CBS 544.65 / FGSC A1164 / JCM 1740 / NRRL 181 / WB 181) (Aspergillus fischerianus).